The chain runs to 391 residues: 3-ketoacyl-CoA thiolase (391 aa).

The Acyl-thioester intermediate role is filled by C95. Active-site proton acceptor residues include H347 and C377.

The protein belongs to the thiolase-like superfamily. Thiolase family. In terms of assembly, heterotetramer of two alpha chains (FadB) and two beta chains (FadA).

It localises to the cytoplasm. The catalysed reaction is an acyl-CoA + acetyl-CoA = a 3-oxoacyl-CoA + CoA. It functions in the pathway lipid metabolism; fatty acid beta-oxidation. In terms of biological role, catalyzes the final step of fatty acid oxidation in which acetyl-CoA is released and the CoA ester of a fatty acid two carbons shorter is formed. This is 3-ketoacyl-CoA thiolase from Pseudomonas entomophila (strain L48).